Here is a 172-residue protein sequence, read N- to C-terminus: Envelope protein UL45 (172 aa).

The Intravirion portion of the chain corresponds to 1–27; that stretch reads MAFRASGPAYQPLAPAASPARARVPAV. The chain crosses the membrane as a helical; Signal-anchor for type II membrane protein span at residues 28 to 48; it reads AWIGVGAIVGAFALVAALVLV. Topologically, residues 49–172 are virion surface; sequence PPRSSWGLSP…TSIRNALGLP (124 aa).

This sequence belongs to the herpesviridae HHV-1 UL45 family.

It localises to the virion membrane. Its function is as follows. Important virulence factor of HSV neurotropism. Seems to be required for glycoprotein B-induced fusion. Dispensable for growth in vitro. This is Envelope protein UL45 from Homo sapiens (Human).